The chain runs to 428 residues: 26S proteasome regulatory subunit 6B homolog (428 aa).

The residue at position 1 (M1) is an N-acetylmethionine. 213-220 (GPPGTGKT) contacts ATP. A Glycyl lysine isopeptide (Lys-Gly) (interchain with G-Cter in ubiquitin) cross-link involves residue K280.

This sequence belongs to the AAA ATPase family. Post-translationally, N-acetylated by NAT3.

It localises to the cytoplasm. The protein resides in the nucleus. Its function is as follows. The 26S proteasome is involved in the ATP-dependent degradation of ubiquitinated proteins. The regulatory (or ATPase) complex confers ATP dependency and substrate specificity to the 26S complex. The polypeptide is 26S proteasome regulatory subunit 6B homolog (RPT3) (Saccharomyces cerevisiae (strain ATCC 204508 / S288c) (Baker's yeast)).